A 91-amino-acid chain; its full sequence is uncharacterized protein (91 aa).

2 helical membrane passes run 10–30 (VLFT…AGGI) and 46–66 (LLVA…QALS). A disordered region spans residues 68 to 91 (MRRQDGARGTARAGRNSARRRMPS).

It localises to the cell membrane. This is an uncharacterized protein from Sinorhizobium fredii (strain NBRC 101917 / NGR234).